Reading from the N-terminus, the 118-residue chain is Large ribosomal subunit protein bL20 (118 aa).

It belongs to the bacterial ribosomal protein bL20 family.

Binds directly to 23S ribosomal RNA and is necessary for the in vitro assembly process of the 50S ribosomal subunit. It is not involved in the protein synthesizing functions of that subunit. In Enterobacter sp. (strain 638), this protein is Large ribosomal subunit protein bL20.